The primary structure comprises 232 residues: dTTP/UTP pyrophosphatase (232 aa).

Catalysis depends on Asp103, which acts as the Proton acceptor.

Belongs to the Maf family. YhdE subfamily. The cofactor is a divalent metal cation.

The protein localises to the cytoplasm. The catalysed reaction is dTTP + H2O = dTMP + diphosphate + H(+). It carries out the reaction UTP + H2O = UMP + diphosphate + H(+). Functionally, nucleoside triphosphate pyrophosphatase that hydrolyzes dTTP and UTP. May have a dual role in cell division arrest and in preventing the incorporation of modified nucleotides into cellular nucleic acids. The chain is dTTP/UTP pyrophosphatase from Bartonella henselae (strain ATCC 49882 / DSM 28221 / CCUG 30454 / Houston 1) (Rochalimaea henselae).